The sequence spans 391 residues: 3-ketoacyl-CoA thiolase (391 aa).

The active-site Acyl-thioester intermediate is the Cys-95. Residues His-347 and Cys-377 each act as proton acceptor in the active site.

This sequence belongs to the thiolase-like superfamily. Thiolase family. In terms of assembly, heterotetramer of two alpha chains (FadB) and two beta chains (FadA).

The protein localises to the cytoplasm. It catalyses the reaction an acyl-CoA + acetyl-CoA = a 3-oxoacyl-CoA + CoA. The protein operates within lipid metabolism; fatty acid beta-oxidation. In terms of biological role, catalyzes the final step of fatty acid oxidation in which acetyl-CoA is released and the CoA ester of a fatty acid two carbons shorter is formed. This Pseudomonas syringae pv. tomato (strain ATCC BAA-871 / DC3000) protein is 3-ketoacyl-CoA thiolase.